The primary structure comprises 90 residues: Small ribosomal subunit protein uS15c (90 aa).

Belongs to the universal ribosomal protein uS15 family. Part of the 30S ribosomal subunit.

It localises to the plastid. The protein localises to the chloroplast. In Glycine max (Soybean), this protein is Small ribosomal subunit protein uS15c (rps15).